A 103-amino-acid chain; its full sequence is Histone H4, major (103 aa).

Gly residues predominate over residues 1–12; the sequence is MAGGKGGKGMGK. The disordered stretch occupies residues 1–29; it reads MAGGKGGKGMGKVGAKRHSKRSNKASIEG. An N6-acetyllysine mark is found at Lys-5, Lys-8, Lys-12, and Lys-16. A compositionally biased stretch (basic residues) spans 14 to 23; it reads GAKRHSKRSN. The DNA-binding element occupies 16 to 21; that stretch reads KRHSKR.

Belongs to the histone H4 family. The nucleosome is a histone octamer containing two molecules each of H2A, H2B, H3 and H4 assembled in one H3-H4 heterotetramer and two H2A-H2B heterodimers. The octamer wraps approximately 147 bp of DNA.

The protein resides in the nucleus. It is found in the chromosome. In terms of biological role, core component of nucleosome. Nucleosomes wrap and compact DNA into chromatin, limiting DNA accessibility to the cellular machineries which require DNA as a template. Histones thereby play a central role in transcription regulation, DNA repair, DNA replication and chromosomal stability. DNA accessibility is regulated via a complex set of post-translational modifications of histones, also called histone code, and nucleosome remodeling. The chain is Histone H4, major from Tetrahymena pyriformis.